We begin with the raw amino-acid sequence, 730 residues long: Catalase-peroxidase (730 aa).

The segment at residues 95-218 (WHSAGTYRVG…LAAVQMGLIY (124 aa)) is a cross-link (tryptophyl-tyrosyl-methioninium (Trp-Tyr) (with M-244)). Histidine 96 (proton acceptor) is an active-site residue. The segment at residues 218–244 (YVNPEGPNGNPDPLGSAHDVRETFARM) is a cross-link (tryptophyl-tyrosyl-methioninium (Tyr-Met) (with W-95)). Residue histidine 259 coordinates heme b.

The protein belongs to the peroxidase family. Peroxidase/catalase subfamily. Homodimer or homotetramer. It depends on heme b as a cofactor. Formation of the three residue Trp-Tyr-Met cross-link is important for the catalase, but not the peroxidase activity of the enzyme.

The enzyme catalyses H2O2 + AH2 = A + 2 H2O. It carries out the reaction 2 H2O2 = O2 + 2 H2O. In terms of biological role, bifunctional enzyme with both catalase and broad-spectrum peroxidase activity. The protein is Catalase-peroxidase of Clostridium botulinum (strain Eklund 17B / Type B).